The sequence spans 427 residues: Membrane-bound hydrogenase subunit alpha (427 aa).

Residues cysteine 68, cysteine 71, cysteine 374, and cysteine 377 each contribute to the Ni(2+) site.

It belongs to the complex I 49 kDa subunit family. The membrane-bound hydrogenase complex is composed of MbhK and MbhL, and may also contain MbhJ. It depends on Ni(2+) as a cofactor.

Its subcellular location is the cell membrane. The enzyme catalyses H2 + 2 oxidized [2Fe-2S]-[ferredoxin] = 2 reduced [2Fe-2S]-[ferredoxin] + 2 H(+). Inhibited by 0.1 mM Cu(2+). Functionally, alpha subunit of a hydrogen-evolving hydrogenase that utilizes protons both as a substrate for hydrogen production and proton translocation. Acts by coupling the redox reaction via ferredoxin and iron-sulfur (Fe-S) clusters to proton translocation across the membrane thereby conserving the redox energy in a proton gradient. The polypeptide is Membrane-bound hydrogenase subunit alpha (Pyrococcus furiosus (strain ATCC 43587 / DSM 3638 / JCM 8422 / Vc1)).